The sequence spans 90 residues: Small ribosomal subunit protein uS15c (90 aa).

This sequence belongs to the universal ribosomal protein uS15 family. In terms of assembly, part of the 30S ribosomal subunit.

It is found in the plastid. It localises to the chloroplast. The protein is Small ribosomal subunit protein uS15c (rps15) of Platanus occidentalis (Sycamore).